A 163-amino-acid polypeptide reads, in one-letter code: Cyanate hydratase (163 aa).

Catalysis depends on residues R103, E106, and S129.

Belongs to the cyanase family.

The catalysed reaction is cyanate + hydrogencarbonate + 3 H(+) = NH4(+) + 2 CO2. Its function is as follows. Catalyzes the reaction of cyanate with bicarbonate to produce ammonia and carbon dioxide. This is Cyanate hydratase from Talaromyces marneffei (strain ATCC 18224 / CBS 334.59 / QM 7333) (Penicillium marneffei).